Here is a 96-residue protein sequence, read N- to C-terminus: VKVTFKVEKGSDPKKLVLDIKYTRPGDTLAEVELRQHGSEEWEPLTKKGNLWEVKSSKPLTGPFNFRFMSKGGMRNVFDEVIPTAFKIGTTYTPEE.

The 81-residue stretch at 14 to 94 (KKLVLDIKYT…AFKIGTTYTP (81 aa)) folds into the Expansin-like CBD domain.

The protein belongs to the expansin family. Expansin B subfamily.

It is found in the secreted. The chain is Pollen allergen Dac g 3 from Dactylis glomerata (Orchard grass).